The following is a 1485-amino-acid chain: Putative E3 ubiquitin-protein ligase LIN-2 (1485 aa).

A compositionally biased stretch (acidic residues) spans 337 to 353 (EENEDDSDSELDNESVD). 3 disordered regions span residues 337–363 (EENE…IFSP), 384–450 (NQIP…ISNA), and 462–507 (RKND…KLSM). A compositionally biased stretch (low complexity) spans 438-450 (SSPDISIDNISNA). Positions 466-484 (SQTPSMNQDNENSLVLNDS) are enriched in polar residues. One can recognise a U-box domain in the interval 510-585 (KPPKDFVCPI…TSWKEQNPEL (76 aa)). WD repeat units lie at residues 1194–1232 (SCKE…KVCD), 1246–1283 (EHTK…IKCI), 1409–1448 (SLST…RVAS), and 1454–1485 (GHTK…WALD).

It catalyses the reaction S-ubiquitinyl-[E2 ubiquitin-conjugating enzyme]-L-cysteine + [acceptor protein]-L-lysine = [E2 ubiquitin-conjugating enzyme]-L-cysteine + N(6)-ubiquitinyl-[acceptor protein]-L-lysine.. Its pathway is protein modification; protein ubiquitination. In terms of biological role, putative E3 ubiquitin-protein ligase involved in the rhizobial infection process. Plays an important role in the early steps of infection thread formation and in growth and differentiation of nodules. In Lotus japonicus (Lotus corniculatus var. japonicus), this protein is Putative E3 ubiquitin-protein ligase LIN-2.